We begin with the raw amino-acid sequence, 121 residues long: Protein yippee (121 aa).

In terms of domain architecture, Yippee spans 13 to 110 (KLFNCAQCHT…LEYALITEAE (98 aa)). Zn(2+) is bound by residues Cys17, Cys20, Cys73, and Cys76.

It belongs to the yippee family. In terms of assembly, interacts with hemolin.

This chain is Protein yippee, found in Drosophila melanogaster (Fruit fly).